We begin with the raw amino-acid sequence, 320 residues long: Nucleotide-binding protein Psyc_0118 (320 aa).

32 to 39 (GRSGSGKT) contributes to the ATP binding site. Residue 82–85 (DIRT) participates in GTP binding.

It belongs to the RapZ-like family.

Displays ATPase and GTPase activities. The chain is Nucleotide-binding protein Psyc_0118 from Psychrobacter arcticus (strain DSM 17307 / VKM B-2377 / 273-4).